The primary structure comprises 337 residues: Biotin synthase (337 aa).

The 231-residue stretch at 58 to 288 folds into the Radical SAM core domain; that stretch reads AGSELLHACS…AHPHKIIKFA (231 aa). [4Fe-4S] cluster-binding residues include cysteine 76, cysteine 80, and cysteine 83. Residues cysteine 155, cysteine 216, and lysine 286 each contribute to the [2Fe-2S] cluster site.

This sequence belongs to the radical SAM superfamily. Biotin synthase family. Homodimer. [4Fe-4S] cluster serves as cofactor. It depends on [2Fe-2S] cluster as a cofactor.

The catalysed reaction is (4R,5S)-dethiobiotin + (sulfur carrier)-SH + 2 reduced [2Fe-2S]-[ferredoxin] + 2 S-adenosyl-L-methionine = (sulfur carrier)-H + biotin + 2 5'-deoxyadenosine + 2 L-methionine + 2 oxidized [2Fe-2S]-[ferredoxin]. It participates in cofactor biosynthesis; biotin biosynthesis; biotin from 7,8-diaminononanoate: step 2/2. Functionally, catalyzes the conversion of dethiobiotin (DTB) to biotin by the insertion of a sulfur atom into dethiobiotin via a radical-based mechanism. This is Biotin synthase from Pelodictyon phaeoclathratiforme (strain DSM 5477 / BU-1).